A 268-amino-acid chain; its full sequence is Peptide transport system ATP-binding protein SapF (268 aa).

In terms of domain architecture, ABC transporter spans 6-251 (LEVRNLSKTF…PLHELTRRLI (246 aa)). 47–54 (GENGSGKS) is a binding site for ATP.

Belongs to the ABC transporter superfamily.

It localises to the cell inner membrane. In terms of biological role, involved in a peptide intake transport system that plays a role in the resistance to antimicrobial peptides. This is Peptide transport system ATP-binding protein SapF from Salmonella typhimurium (strain LT2 / SGSC1412 / ATCC 700720).